Reading from the N-terminus, the 130-residue chain is MAQVQYYGTGRRKSSVARVRLVPGDGKIVINNRDWEDYIPFAALREVIKQPLVATETLGNYDVLVNVHGGGYTGQAGAIRHGVARALLQVAPEYRPALKSAGLLTRDPRMKERKKYGLKGARRAPQFSKR.

Residues 109 to 130 form a disordered region; the sequence is RMKERKKYGLKGARRAPQFSKR. Residues 111 to 130 are compositionally biased toward basic residues; that stretch reads KERKKYGLKGARRAPQFSKR.

It belongs to the universal ribosomal protein uS9 family.

The protein is Small ribosomal subunit protein uS9 of Listeria innocua serovar 6a (strain ATCC BAA-680 / CLIP 11262).